The sequence spans 320 residues: Malate dehydrogenase (320 aa).

Residues 10 to 15 and aspartate 34 contribute to the NAD(+) site; that span reads GAGQIG. Residues arginine 83 and arginine 89 each contribute to the substrate site. NAD(+) contacts are provided by residues asparagine 96 and 119–121; that span reads ITN. Positions 121 and 152 each coordinate substrate. Histidine 176 functions as the Proton acceptor in the catalytic mechanism.

Belongs to the LDH/MDH superfamily. MDH type 3 family.

It carries out the reaction (S)-malate + NAD(+) = oxaloacetate + NADH + H(+). In terms of biological role, catalyzes the reversible oxidation of malate to oxaloacetate. The polypeptide is Malate dehydrogenase (Methylobacterium nodulans (strain LMG 21967 / CNCM I-2342 / ORS 2060)).